We begin with the raw amino-acid sequence, 882 residues long: Alanine--tRNA ligase (882 aa).

Zn(2+)-binding residues include H574, H578, C682, and H686. Residues 853–882 (GGRGGGKGALAQGGGLDPRKAREALPGLLP) are disordered. The segment covering 854–868 (GRGGGKGALAQGGGL) has biased composition (gly residues).

The protein belongs to the class-II aminoacyl-tRNA synthetase family. It depends on Zn(2+) as a cofactor.

It is found in the cytoplasm. It catalyses the reaction tRNA(Ala) + L-alanine + ATP = L-alanyl-tRNA(Ala) + AMP + diphosphate. Functionally, catalyzes the attachment of alanine to tRNA(Ala) in a two-step reaction: alanine is first activated by ATP to form Ala-AMP and then transferred to the acceptor end of tRNA(Ala). Also edits incorrectly charged Ser-tRNA(Ala) and Gly-tRNA(Ala) via its editing domain. The chain is Alanine--tRNA ligase from Thermus thermophilus (strain ATCC BAA-163 / DSM 7039 / HB27).